The following is a 140-amino-acid chain: ATP synthase epsilon chain (140 aa).

This sequence belongs to the ATPase epsilon chain family. In terms of assembly, F-type ATPases have 2 components, CF(1) - the catalytic core - and CF(0) - the membrane proton channel. CF(1) has five subunits: alpha(3), beta(3), gamma(1), delta(1), epsilon(1). CF(0) has three main subunits: a, b and c.

It localises to the cell inner membrane. Functionally, produces ATP from ADP in the presence of a proton gradient across the membrane. The protein is ATP synthase epsilon chain of Neisseria meningitidis serogroup A / serotype 4A (strain DSM 15465 / Z2491).